Here is a 293-residue protein sequence, read N- to C-terminus: Microtubule-associated protein RP/EB family member 1B (293 aa).

Residues 13 to 115 form the Calponin-homology (CH) domain; the sequence is FVGRNEILSW…FLQWLKRFCD (103 aa). 2 disordered regions span residues 124-188 and 262-293; these read ENYN…SAEV and LGLE…ETQT. Basic and acidic residues predominate over residues 129–141; that stretch reads VERRSRGGREKSV. A compositionally biased stretch (polar residues) spans 151–166; it reads LQTNNMHHPPVATSNK. Residues 180–250 enclose the EB1 C-terminal domain; that stretch reads GGSNSSAEVQ…LYATDANESV (71 aa). Acidic residues predominate over residues 266 to 285; it reads GYEEEGKEEEEEEEEEEEEA.

Belongs to the MAPRE family. As to quaternary structure, homodimer and heterodimer with EB1A. Highly expressed in guard cells of leaf stomata, pollen grains and pollen tubes. Expressed in young roots.

It is found in the cytoplasm. The protein localises to the cytoskeleton. The protein resides in the spindle pole. It localises to the phragmoplast. Binds to the plus end of microtubules and regulates the dynamics of the microtubule cytoskeleton. May be involved in anchoring microtubules to their nucleation sites and/or functioning as a reservoir for distribution to the growing end. In plants, microtubule minus ends are not necessarily severed from the nucleation site and transported to the plus end of a microtubule as part of the recycling process. May play a role in endomembrane organization during polarized growth of plant cells. This is Microtubule-associated protein RP/EB family member 1B (EB1B) from Arabidopsis thaliana (Mouse-ear cress).